The primary structure comprises 1534 residues: Ribosome-binding protein 1 (1534 aa).

The Lumenal segment spans residues 1–7 (MDIYDTQ). A helical membrane pass occupies residues 8–28 (TLGVMVFGGFMVVSAIGIFLV). The Cytoplasmic portion of the chain corresponds to 29 to 1534 (STFSMKETSY…DSSSKEGTSV (1506 aa)). Disordered stretches follow at residues 45 to 91 (QRKE…PAPN) and 125 to 152 (PAMP…VEPA). The span at 52 to 63 (THHQKVEKKKKE) shows a compositional bias: basic residues. The span at 64-88 (KTVEKKGKTKKKEEKPNGKIPDHEP) shows a compositional bias: basic and acidic residues. Residues 125-135 (PAMPQEKLAPS) are compositionally biased toward low complexity. Lys-148 participates in a covalent cross-link: Glycyl lysine isopeptide (Lys-Gly) (interchain with G-Cter in SUMO2). 2 positions are modified to phosphoserine: Ser-159 and Ser-165. 3 disordered regions span residues 173–780 (APKE…PLYL), 968–987 (KELV…RKAL), and 1021–1082 (RELC…RAEN). Residues 175 to 194 (KEVPMVVVPPVGAKAGTPAT) show a composition bias toward low complexity. 54 repeat units span residues 197–206 (AQGKKAEGAQ), 207–216 (NQSRKAEGAP), 217–226 (NQGKKAEGAL), 227–236 (NQGKKAEGAQ), 237–246 (NQGKKVEVAP), 247–256 (NQGKKAEGGQ), 257–266 (NQGKKVEGAQ), 267–276 (NQGKKAEGTP), 277–286 (NQGKKAEGAP), 287–296 (NQGKKTDGAP), 297–306 (NQGKKSEGAP), 307–316 (NQGKKAEGAQ), 317–326 (NQGKKVEVAP), 327–336 (NQGKKAEGGQ), 337–346 (NQGKKVEGAQ), 347–356 (NQGKKAEGTP), 357–366 (NQGKKAEGAP), 367–376 (NQGKKTDGAP), 377–386 (NQGKKSEGAP), 387–396 (NQGKKVEGAQ), 397–406 (NQGKKVEGVQ), 407–416 (NQGKKAEGAQ), 417–426 (NQGKKAEGTS), 427–436 (SQGRKEEGTP), 437–446 (NLGKKAEGSP), 447–456 (NQGKKVEVVQ), 457–466 (NQSKKVEGAP), 467–476 (NQGKKAEGSQ), 477–486 (NQGKKTEGAS), 487–496 (NQGKKVDGAQ), 497–506 (NQGKKAEGAP), 507–516 (NQGKKVEGAQ), 517–526 (NQGKKAEGTP), 527–536 (NQGKKAEGAQ), 537–546 (NQGKKAEGAP), 547–556 (NQGKKAEGAP), 557–566 (NQGKKAEGAP), 567–576 (NQGKKAEGAP), 577–586 (NQGKKAEAAP), 587–596 (NQGKKAEGAP), 597–606 (NQGKKAEGAP), 607–616 (NQGKKAEAAP), 617–626 (NQGKKAEGAP), 627–636 (NQGKKAEGAP), 637–646 (NQGKKAEGAP), 647–656 (NQGKKAEGAQ), 657–666 (NQGKKAEGAP), 667–676 (NQGKKADLVA), 677–686 (NQGTKAEGVA), 687–696 (GQGKKAEGAP), 697–706 (NQGKKGEGTP), 707–716 (NQGKKSEGSP), 717–726 (NQGKKVDASA), and 727–736 (NQSKRAESAP). Residues 197 to 736 (AQGKKAEGAQ…NQSKRAESAP (540 aa)) are 54 X 10 AA tandem repeats of [NASG]-[QL]-[GS]-[KRT]-[KR]-[AVTSEG]-[ED]-[AGVLS]-[ATGSV]-[PQLSA]. Thr-275 bears the Phosphothreonine mark. The segment covering 395–428 (AQNQGKKVEGVQNQGKKAEGAQNQGKKAEGTSSQ) has biased composition (polar residues). The span at 474-499 (GSQNQGKKTEGASNQGKKVDGAQNQG) shows a compositional bias: polar residues. Residues 705–718 (TPNQGKKSEGSPNQ) are compositionally biased toward polar residues. Residue Ser-715 is modified to Phosphoserine. At Ser-747 the chain carries Phosphoserine. Lys-752 is covalently cross-linked (Glycyl lysine isopeptide (Lys-Gly) (interchain with G-Cter in SUMO1)). Residue Ser-1032 is modified to Phosphoserine. A compositionally biased stretch (basic and acidic residues) spans 1059-1080 (AEVKSKSEELSGLHGQLKEARA). An N6-acetyllysine modification is found at Lys-1064. Phosphoserine occurs at positions 1091 and 1110. 3 disordered regions span residues 1224 to 1251 (ELLK…ETQN), 1391 to 1416 (KSHV…VELK), and 1509 to 1534 (ERDT…GTSV). Basic and acidic residues predominate over residues 1509-1528 (ERDTVKKLQEQLDKTDDSSS).

It is found in the endoplasmic reticulum membrane. In terms of biological role, acts as a ribosome receptor and mediates interaction between the ribosome and the endoplasmic reticulum membrane. This is Ribosome-binding protein 1 (RRBP1) from Canis lupus familiaris (Dog).